The chain runs to 269 residues: MSISPGRSFSPMRASGLTGITSAGPTAKLEHVSERFASLWTDLEHEKQNRKLAESSRFQLFTEAVSRLEKGLEAEVKRRAESDKQLQSHFEGEIRALAERSAAQHVDMQNSLKQAVDSLSNRLQDLHSLVREEREQRRNDIEHLATSLVGKVNECVQALDEERNSRLQDQSLSLKRFGEDLITIQQRVDQEKLVRDAELSGLRSEVHEALGNRNLADEQFRNMTLDELTALKGALALEREERIAEDDEIVQAINDYTKALQEGLKLVST.

Positions 1 to 23 (MSISPGRSFSPMRASGLTGITSA) are disordered. The segment at 1-24 (MSISPGRSFSPMRASGLTGITSAG) is nonhelical region. The tract at residues 25 to 269 (PTAKLEHVSE…LQEGLKLVST (245 aa)) is rod. Residues 98–144 (AERSAAQHVDMQNSLKQAVDSLSNRLQDLHSLVREEREQRRNDIEHL) adopt a coiled-coil conformation.

Belongs to the SF-assemblin family.

The protein localises to the cytoplasm. It is found in the cytoskeleton. Functionally, major component of the striated microtubule-associated fibers (SMAFs; system-I-fibers). The sequence is that of SF-assemblin from Chlamydomonas moewusii (Chlamydomonas eugametos).